The primary structure comprises 486 residues: Aspartyl/glutamyl-tRNA(Asn/Gln) amidotransferase subunit B (486 aa).

It belongs to the GatB/GatE family. GatB subfamily. As to quaternary structure, heterotrimer of A, B and C subunits.

It carries out the reaction L-glutamyl-tRNA(Gln) + L-glutamine + ATP + H2O = L-glutaminyl-tRNA(Gln) + L-glutamate + ADP + phosphate + H(+). The enzyme catalyses L-aspartyl-tRNA(Asn) + L-glutamine + ATP + H2O = L-asparaginyl-tRNA(Asn) + L-glutamate + ADP + phosphate + 2 H(+). In terms of biological role, allows the formation of correctly charged Asn-tRNA(Asn) or Gln-tRNA(Gln) through the transamidation of misacylated Asp-tRNA(Asn) or Glu-tRNA(Gln) in organisms which lack either or both of asparaginyl-tRNA or glutaminyl-tRNA synthetases. The reaction takes place in the presence of glutamine and ATP through an activated phospho-Asp-tRNA(Asn) or phospho-Glu-tRNA(Gln). The protein is Aspartyl/glutamyl-tRNA(Asn/Gln) amidotransferase subunit B of Orientia tsutsugamushi (strain Ikeda) (Rickettsia tsutsugamushi).